A 1273-amino-acid polypeptide reads, in one-letter code: DNA-directed RNA polymerase subunit beta (1273 aa).

Belongs to the RNA polymerase beta chain family. The RNAP catalytic core consists of 2 alpha, 1 beta, 1 beta' and 1 omega subunit. When a sigma factor is associated with the core the holoenzyme is formed, which can initiate transcription.

The catalysed reaction is RNA(n) + a ribonucleoside 5'-triphosphate = RNA(n+1) + diphosphate. Functionally, DNA-dependent RNA polymerase catalyzes the transcription of DNA into RNA using the four ribonucleoside triphosphates as substrates. The chain is DNA-directed RNA polymerase subunit beta from Phytoplasma mali (strain AT).